A 179-amino-acid chain; its full sequence is Small ribosomal subunit protein uS5c (179 aa).

The S5 DRBM domain maps to 26 to 89 (FVERLIKISR…TDGRKNLIDV (64 aa)).

Belongs to the universal ribosomal protein uS5 family. In terms of assembly, part of the 30S ribosomal subunit. Contacts protein S4.

Its subcellular location is the plastid. It is found in the chloroplast. Functionally, with S4 and S12 plays an important role in translational accuracy. This Thalassiosira pseudonana (Marine diatom) protein is Small ribosomal subunit protein uS5c (rps5).